The chain runs to 378 residues: MEIKQINSTIKSRAAVAFAPNQPLQIVEIDVEMPRKGEVLIRNTHTGVCHTDAFTLSGSDPEGVFPVVLGHEGAGVVVAVGEGVLSVKPGDHVIPLYTAECGECEFCRSGKTNLCVSVRDTQGKGLMPDCTTRFSYQGQPIYHYMGCSTFSEYSVVAEVSLAKINPEANHEQVCLLGCGVTTGIGAVHNTAKVQEGDSVAVFGLGAIGLAVVQGARQAKAGRIIAIDTNPAKFELAKQFGATDCLNPNDYDKPIKDVLLDINKWGIDHTFECIGNVNVMRQALESAHRGWGQSIIIGVAGAGQEISTRPFQLVTGRVWKGSAFGGVKGRSELPQMVEDSMKGDIQLEPFVTHTMPLDKINEAFELMHEGKSIRTVIHY.

Residues cysteine 49, histidine 71, cysteine 101, cysteine 104, cysteine 107, cysteine 115, and cysteine 178 each coordinate Zn(2+).

The protein belongs to the zinc-containing alcohol dehydrogenase family. Class-III subfamily. In terms of assembly, homodimer. Zn(2+) serves as cofactor.

Its subcellular location is the cytoplasm. It catalyses the reaction S-(hydroxymethyl)glutathione + NADP(+) = S-formylglutathione + NADPH + H(+). The enzyme catalyses S-(hydroxymethyl)glutathione + NAD(+) = S-formylglutathione + NADH + H(+). It carries out the reaction a primary alcohol + NAD(+) = an aldehyde + NADH + H(+). The catalysed reaction is a secondary alcohol + NAD(+) = a ketone + NADH + H(+). It catalyses the reaction S-nitrosoglutathione + NADH + H(+) = S-(hydroxysulfenamide)glutathione + NAD(+). Its function is as follows. Has high formaldehyde dehydrogenase activity in the presence of glutathione and catalyzes the oxidation of normal alcohols in a reaction that is not GSH-dependent. In addition, hemithiolacetals other than those formed from GSH, including omega-thiol fatty acids, also are substrates. Also acts as a S-nitroso-glutathione reductase by catalyzing the NADH-dependent reduction of S-nitrosoglutathione. This Haemophilus influenzae (strain ATCC 51907 / DSM 11121 / KW20 / Rd) protein is S-(hydroxymethyl)glutathione dehydrogenase (frmA).